The chain runs to 388 residues: tRNA-specific adenosine deaminase 1 (388 aa).

In terms of domain architecture, A to I editase spans 63-388; sequence CLATGVKCTP…PNGGNEFQWI (326 aa). His89 provides a ligand contact to Zn(2+). Glu91 functions as the Proton donor in the catalytic mechanism. Position 96 (Arg96) interacts with 1D-myo-inositol hexakisphosphate. Residues Cys144 and Cys201 each contribute to the Zn(2+) site. Positions 204, 357, and 363 each coordinate 1D-myo-inositol hexakisphosphate.

This sequence belongs to the ADAT1 family. Requires 1D-myo-inositol hexakisphosphate as cofactor. Zn(2+) is required as a cofactor.

The protein localises to the cytoplasm. Its subcellular location is the nucleus. It catalyses the reaction adenosine(37) in tRNA(Ala) + H2O + H(+) = inosine(37) in tRNA(Ala) + NH4(+). Its function is as follows. Deaminates adenosine-37 to inosine in tRNA-Ala. In Schizosaccharomyces pombe (strain 972 / ATCC 24843) (Fission yeast), this protein is tRNA-specific adenosine deaminase 1.